Consider the following 251-residue polypeptide: MAVHLLIVDALNLIRRIHAVQGSPCVDTCLHALEQLIVHSQPTHAVAVFDDEDRAHGWRHQRLPEYKAGRAPMPETLVAEMPALRAAFEQRGIRCWASPGSEADDLAATLAVKVAQAGHQATIVSTDKGYCQLLSPTIRIRDYFQKRWLDAPFIASEFGVTPEQLADYWGLAGISSSKVPGVAGIGPKSAAQLLNEFQDLEGLYARLAEVPEKWRKKLAAHQEMAFTCREVARLQTDLQLDGNLQQLRLTR.

Mg(2+) is bound at residue aspartate 104. The 5'-3' exonuclease domain occupies 160–249 (VTPEQLADYW…LDGNLQQLRL (90 aa)). K(+) is bound by residues leucine 171, alanine 172, proline 180, valine 182, and isoleucine 185. Residues 184-189 (GIGPKS) form an interaction with DNA region.

Belongs to the Xni family. Requires Mg(2+) as cofactor. It depends on K(+) as a cofactor.

Functionally, has flap endonuclease activity. During DNA replication, flap endonucleases cleave the 5'-overhanging flap structure that is generated by displacement synthesis when DNA polymerase encounters the 5'-end of a downstream Okazaki fragment. This Klebsiella pneumoniae subsp. pneumoniae (strain ATCC 700721 / MGH 78578) protein is Flap endonuclease Xni.